The primary structure comprises 425 residues: Formyl-CoA:oxalate CoA-transferase (425 aa).

CoA is bound by residues 17 to 18 (QS), R38, 72 to 75 (LDTK), 96 to 98 (NFG), R104, and 136 to 139 (KVYE). D168 functions as the Nucleophile in the catalytic mechanism. 247-249 (GGQ) is a substrate binding site.

Belongs to the CoA-transferase III family. Frc subfamily. Homodimer.

It carries out the reaction formyl-CoA + oxalate = oxalyl-CoA + formate. Its pathway is metabolic intermediate degradation; oxalate degradation; CO(2) and formate from oxalate: step 1/2. Involved in the catabolism of oxalate and in the adapatation to low pH via the induction of the oxalate-dependent acid tolerance response (ATR). Catalyzes the transfer of the CoA moiety from formyl-CoA to oxalate. The sequence is that of Formyl-CoA:oxalate CoA-transferase from Rhodopseudomonas palustris (strain ATCC BAA-98 / CGA009).